We begin with the raw amino-acid sequence, 839 residues long: LPS-assembly protein LptD (839 aa).

A signal peptide spans 1-21 (MAIGITACVLSLINYQGLAYS).

This sequence belongs to the LptD family. As to quaternary structure, component of the lipopolysaccharide transport and assembly complex. Interacts with LptE and LptA.

It localises to the cell outer membrane. Its function is as follows. Together with LptE, is involved in the assembly of lipopolysaccharide (LPS) at the surface of the outer membrane. The protein is LPS-assembly protein LptD of Legionella pneumophila subsp. pneumophila (strain Philadelphia 1 / ATCC 33152 / DSM 7513).